Here is a 152-residue protein sequence, read N- to C-terminus: Ribosome maturation factor RimP (152 aa).

This sequence belongs to the RimP family.

The protein localises to the cytoplasm. Its function is as follows. Required for maturation of 30S ribosomal subunits. This is Ribosome maturation factor RimP from Alkaliphilus metalliredigens (strain QYMF).